The primary structure comprises 297 residues: D-alanine--D-alanine ligase (297 aa).

One can recognise an ATP-grasp domain in the interval 103-293; that stretch reads KEILMHHRMP…FDSFVKSILE (191 aa). 129–180 contacts ATP; that stretch reads ISFPVAVKPSSGGSSIATFKVKSLEELENAYQQASKHGEVMIEQWVTGKEIT. Positions 247, 260, and 262 each coordinate Mg(2+).

The protein belongs to the D-alanine--D-alanine ligase family. Mg(2+) is required as a cofactor. The cofactor is Mn(2+).

The protein resides in the cytoplasm. The catalysed reaction is 2 D-alanine + ATP = D-alanyl-D-alanine + ADP + phosphate + H(+). The protein operates within cell wall biogenesis; peptidoglycan biosynthesis. In terms of biological role, cell wall formation. This is D-alanine--D-alanine ligase from Francisella philomiragia subsp. philomiragia (strain ATCC 25017 / CCUG 19701 / FSC 153 / O#319-036).